The following is a 638-amino-acid chain: Methyl-accepting chemotaxis protein McpQ (638 aa).

A helical transmembrane segment spans residues 18–38 (LGLGFGLVLLLTLAITLTGWH). An HBM domain is found at 45 to 282 (DRGDKLGNIS…SQTEVRDAAA (238 aa)). A helical transmembrane segment spans residues 287–307 (TLLTVATVLALALGLLAAWAI). The region spanning 309-361 (RQIIIPLRQTLRAAERVASGDLTQSLQVQRRDELGQLQASMHRMTQGLRELIG) is the HAMP domain. Positions 366 to 602 (GVTQIASAAE…EINRSVMNVR (237 aa)) constitute a Methyl-accepting transducer domain.

This sequence belongs to the methyl-accepting chemotaxis (MCP) protein family.

The protein localises to the cell membrane. Functionally, chemotactic-signal transducers respond to changes in the concentration of attractants and repellents in the environment, transduce a signal from the outside to the inside of the cell, and facilitate sensory adaptation through the variation of the level of methylation. McpQ recognizes specifically citrate and citrate/metal(2+) complexes. Binds citrate/metal(2+) complexes with higher affinity than free citrate, and mediates preferentially chemotaxis toward citrate/metal(2+) complexes. This is Methyl-accepting chemotaxis protein McpQ from Pseudomonas putida (strain ATCC 47054 / DSM 6125 / CFBP 8728 / NCIMB 11950 / KT2440).